Consider the following 339-residue polypeptide: DNA-directed RNA polymerase subunit alpha (339 aa).

Residues 1–238 form an alpha N-terminal domain (alpha-NTD) region; it reads MVDPIVTKNW…EQLSIFINFD (238 aa). The tract at residues 250-339 is alpha C-terminal domain (alpha-CTD); the sequence is VEEQKLNENL…KAAPQGAPKV (90 aa).

Belongs to the RNA polymerase alpha chain family. In terms of assembly, homodimer. The RNAP catalytic core consists of 2 alpha, 1 beta, 1 beta' and 1 omega subunit. When a sigma factor is associated with the core the holoenzyme is formed, which can initiate transcription.

It catalyses the reaction RNA(n) + a ribonucleoside 5'-triphosphate = RNA(n+1) + diphosphate. Its function is as follows. DNA-dependent RNA polymerase catalyzes the transcription of DNA into RNA using the four ribonucleoside triphosphates as substrates. This is DNA-directed RNA polymerase subunit alpha from Anaeromyxobacter dehalogenans (strain 2CP-C).